The sequence spans 334 residues: Immune-associated nucleotide-binding protein 3 (334 aa).

The AIG1-type G domain occupies 11–219 (KAVKNIVLVG…FRGKMYLEIK (209 aa)). The interval 20–27 (GRTGNGKS) is G1. GTP contacts are provided by residues 20 to 28 (GRTGNGKSA) and Ser-41. The segment at 47–51 (GVTKT) is G2. Residues 69–72 (DTPG) are G3. The tract at residues 139 to 142 (TGGD) is G4. The tract at residues 178–180 (NNM) is G5. Asn-179 provides a ligand contact to GTP. Positions 272–306 (SAAHERMVSMLNENLENAHRENIDLRKAHDHEQKK) form a coiled coil.

The protein belongs to the TRAFAC class TrmE-Era-EngA-EngB-Septin-like GTPase superfamily. AIG1/Toc34/Toc159-like paraseptin GTPase family. IAN subfamily. In terms of tissue distribution, mostly expressed in pollen. Also detected in lateral roots and radicles.

In Arabidopsis thaliana (Mouse-ear cress), this protein is Immune-associated nucleotide-binding protein 3.